We begin with the raw amino-acid sequence, 1010 residues long: Protein translocase subunit SecA (1010 aa).

ATP contacts are provided by residues glutamine 86, 104–108, and aspartate 535; that span reads GEGKT. The segment covering 893–904 has biased composition (low complexity); the sequence is QAGAADGNAKGA. The tract at residues 893 to 916 is disordered; it reads QAGAADGNAKGARTVRHSVRLPGR. Positions 920, 922, 931, and 932 each coordinate Zn(2+). Over residues 950-981 the composition is skewed to low complexity; that stretch reads QHAAVAADTPAQPAPQATATRPPTSQVPRGRA. The tract at residues 950–1010 is disordered; the sequence is QHAAVAADTP…RGKGASARKK (61 aa).

Belongs to the SecA family. In terms of assembly, monomer and homodimer. Part of the essential Sec protein translocation apparatus which comprises SecA, SecYEG and auxiliary proteins SecDF. Other proteins may also be involved. Zn(2+) is required as a cofactor.

The protein localises to the cell membrane. The protein resides in the cytoplasm. The catalysed reaction is ATP + H2O + cellular proteinSide 1 = ADP + phosphate + cellular proteinSide 2.. Its function is as follows. Part of the Sec protein translocase complex. Interacts with the SecYEG preprotein conducting channel. Has a central role in coupling the hydrolysis of ATP to the transfer of proteins into and across the cell membrane, serving as an ATP-driven molecular motor driving the stepwise translocation of polypeptide chains across the membrane. This chain is Protein translocase subunit SecA, found in Roseiflexus sp. (strain RS-1).